The sequence spans 317 residues: Glucokinase (317 aa).

It belongs to the ROK (NagC/XylR) family. In terms of assembly, homodimer. The cofactor is a divalent metal cation.

It catalyses the reaction D-glucose + ATP = D-glucose 6-phosphate + ADP + H(+). In terms of biological role, catalyzes the phosphorylation of D-glucose to D-glucose 6-phosphate using ATP as the phosphate donor. Can also phosphorylate 2-deoxyglucose, with lower efficiency. ITP can also serve as a phosphoryl donor. In Thermotoga maritima (strain ATCC 43589 / DSM 3109 / JCM 10099 / NBRC 100826 / MSB8), this protein is Glucokinase.